Here is a 485-residue protein sequence, read N- to C-terminus: Glutamyl-tRNA(Gln) amidotransferase subunit A (485 aa).

Catalysis depends on charge relay system residues lysine 75 and serine 150. Serine 174 (acyl-ester intermediate) is an active-site residue.

It belongs to the amidase family. GatA subfamily. In terms of assembly, heterotrimer of A, B and C subunits.

It carries out the reaction L-glutamyl-tRNA(Gln) + L-glutamine + ATP + H2O = L-glutaminyl-tRNA(Gln) + L-glutamate + ADP + phosphate + H(+). Functionally, allows the formation of correctly charged Gln-tRNA(Gln) through the transamidation of misacylated Glu-tRNA(Gln) in organisms which lack glutaminyl-tRNA synthetase. The reaction takes place in the presence of glutamine and ATP through an activated gamma-phospho-Glu-tRNA(Gln). This chain is Glutamyl-tRNA(Gln) amidotransferase subunit A, found in Trichodesmium erythraeum (strain IMS101).